We begin with the raw amino-acid sequence, 405 residues long: MQEKDASSQGFLPHFQHFATQAIHVGQEPEQWTSRAVVPLISLSTTFKQAAPGQHSGFEYSRSGNPTRNCLEKAVAALDGAKYCLAFASGLAATVTITHLLKAGDQIICMDDVYGGTNRYFRQVASEFGLKISFVDCSKIKLLEAAITPETKLVWIETPTNPVLKMIDIEACAHIVHKRGDIILVVDNTFMSPYFQRPLALGADICMCSATKYMNGHSDVVMGLVSVNCERLHNRLRFLQNSLGAVPSPLDCYLCNRGLKTLHVRMEKHFKNGMAVAQFLESNPGVEKVIYPGLPSHPQHELAKRQCTGCTGMITFYIKGTLQHAEIFLKNLKLFTLAESLGGFESLVELPAIMTHASVPKNDRDVLGISDTLIRLSVGLEDEKDLLEDLDQALKAAHPPSGSHD.

Residues R62, Y114, and R119 each contribute to the substrate site. K212 carries the N6-(pyridoxal phosphate)lysine modification. Substrate is bound at residue E339.

This sequence belongs to the trans-sulfuration enzymes family. As to quaternary structure, homotetramer. Interacts with CALM in a calcium-dependent manner. It depends on pyridoxal 5'-phosphate as a cofactor.

It is found in the cytoplasm. The enzyme catalyses L,L-cystathionine + H2O = 2-oxobutanoate + L-cysteine + NH4(+). It carries out the reaction L-cysteine + H2O = hydrogen sulfide + pyruvate + NH4(+) + H(+). The catalysed reaction is L-homocysteine + H2O = 2-oxobutanoate + hydrogen sulfide + NH4(+) + H(+). It catalyses the reaction L-homoserine = 2-oxobutanoate + NH4(+). The enzyme catalyses L-selenocystathionine + H2O = L-selenocysteine + 2-oxobutanoate + NH4(+). The protein operates within amino-acid biosynthesis; L-cysteine biosynthesis; L-cysteine from L-homocysteine and L-serine: step 2/2. Its function is as follows. Catalyzes the last step in the trans-sulfuration pathway from L-methionine to L-cysteine in a pyridoxal-5'-phosphate (PLP)-dependent manner, which consists on cleaving the L,L-cystathionine molecule into L-cysteine, ammonia and 2-oxobutanoate. Part of the L-cysteine derived from the trans-sulfuration pathway is utilized for biosynthesis of the ubiquitous antioxidant glutathione. Besides its role in the conversion of L-cystathionine into L-cysteine, it utilizes L-cysteine and L-homocysteine as substrates (at much lower rates than L,L-cystathionine) to produce hydrogen sulfide (H2S). In vitro, it converts two L-cysteine molecules into lanthionine and H2S, and two L-homocysteine molecules to homolanthionine and H2S, which can be particularly relevant under conditions of severe hyperhomocysteinemia. Lanthionine and homolanthionine are structural homologs of L,L-cystathionine that differ by the absence or presence of an extra methylene group, respectively. Acts as a cysteine-protein sulfhydrase by mediating sulfhydration of target proteins: sulfhydration consists of converting -SH groups into -SSH on specific cysteine residues of target proteins such as GAPDH, PTPN1 and NF-kappa-B subunit RELA, thereby regulating their function. By generating the gasotransmitter H2S, it participates in a number of physiological processes such as vasodilation, bone protection, and inflammation. Plays an essential role in myogenesis by contributing to the biogenesis of H2S in skeletal muscle tissue. Can also accept homoserine as substrate. Catalyzes the elimination of selenocystathionine (which can be derived from the diet) to yield selenocysteine, ammonia and 2-oxobutanoate. In Macaca fascicularis (Crab-eating macaque), this protein is Cystathionine gamma-lyase (CTH).